The sequence spans 515 residues: MAKRPLQTEANVERLPSELKRRKKKNSLKVTPGTVIGQNSKSRRNVPGMDDGNDKRASDSRYLPTPELSALPQSTIDEYLSSNSIHIADPSTDPSLRPITSFSFLPESSNDLYLPLEKFSSPTPIQAVSWPLAFAGRDLIGVAETGSGKTLAFGLPCLRRVLELNNSETSCKPCALIITPTRELAVQIYDQLLRFSSAVDVGIACIYGGSPKDHQRREIRNASVVIATPGRLKDFQADQTINLSGVKYLVLDEADRMLDKGFEQDIQDIVKGIPSTQKRQTIMFTATWPIGVRNLAASFTKNPVTVTIGDSSDIRANKRIKQMVEVLQPYEKDSRLLELLRRYQDGGKNNHRILVFCLYKKEAMRVERFIGSKGFKVAGIHGDMSQTERFRSLEAFKSGSISLLVATDVAARGLDIPAVKLVLNVTFPLTIEDYVHRIGRTGRAGAEGLAITLFTERDKALSGPLINVLRAADQDVPESLLKFGATVKKKQHESYGAFFREMDTTKVASRIKFED.

Residues 1-67 (MAKRPLQTEA…SDSRYLPTPE (67 aa)) are disordered. The Q motif motif lies at 100–127 (TSFSFLPESSNDLYLPLEKFSSPTPIQA). Residues 130–306 (WPLAFAGRDL…ASFTKNPVTV (177 aa)) form the Helicase ATP-binding domain. 143-150 (AETGSGKT) lines the ATP pocket. Residues 252 to 255 (DEAD) carry the DEAD box motif. The Helicase C-terminal domain maps to 335-484 (RLLELLRRYQ…DVPESLLKFG (150 aa)).

This sequence belongs to the DEAD box helicase family. DDX5/DBP2 subfamily.

It localises to the nucleus. It is found in the nucleolus. It carries out the reaction ATP + H2O = ADP + phosphate + H(+). ATP-dependent RNA helicase required for 60S ribosomal subunit synthesis. Involved in efficient pre-rRNA processing, predominantly at site A3, which is necessary for the normal formation of 25S and 5.8S rRNAs. The sequence is that of ATP-dependent RNA helicase DBP3 (DBP3) from Coccidioides immitis (strain RS) (Valley fever fungus).